We begin with the raw amino-acid sequence, 213 residues long: Orotate phosphoribosyltransferase (213 aa).

Lysine 26 serves as a coordination point for 5-phospho-alpha-D-ribose 1-diphosphate. An orotate-binding site is contributed by 34-35 (FF). 5-phospho-alpha-D-ribose 1-diphosphate-binding positions include 72 to 73 (YK), arginine 99, lysine 100, lysine 103, histidine 105, and 124 to 132 (DDVITAGTA). Residues threonine 128 and arginine 156 each coordinate orotate.

This sequence belongs to the purine/pyrimidine phosphoribosyltransferase family. PyrE subfamily. As to quaternary structure, homodimer. The cofactor is Mg(2+).

The enzyme catalyses orotidine 5'-phosphate + diphosphate = orotate + 5-phospho-alpha-D-ribose 1-diphosphate. Its pathway is pyrimidine metabolism; UMP biosynthesis via de novo pathway; UMP from orotate: step 1/2. Catalyzes the transfer of a ribosyl phosphate group from 5-phosphoribose 1-diphosphate to orotate, leading to the formation of orotidine monophosphate (OMP). The polypeptide is Orotate phosphoribosyltransferase (Klebsiella pneumoniae subsp. pneumoniae (strain ATCC 700721 / MGH 78578)).